The following is a 787-amino-acid chain: Longitudinals lacking protein, isoforms A/B/D/L (787 aa).

Residues 32–97 (VDCTLAAEGK…MYRGEVNISQ (66 aa)) enclose the BTB domain. Disordered stretches follow at residues 115–200 (LSDN…SSVL), 228–340 (SSGP…ASAS), 506–560 (AKDV…SGGK), and 653–677 (TTGSGQSPSNSGHNNSAGGGSSVLG). Composition is skewed to low complexity over residues 162–175 (SGDVSGSREGSSSP), 228–251 (SSGPAAGTSSQASSTQQQQPLTST), 263–293 (TSSTAAPASGASASAAVQQAHLHQQQAQTTS), 329–340 (NSATGPNPASAS), 537–560 (HSSSNHSSNGNGSGKPTKTSSGGK), and 659–668 (SPSNSGHNNS). Residues 685–707 (HPCPVCGRVYKLKSSLRNHQKWE) form a C2H2-type 1; degenerate zinc finger. The C2H2-type 2 zinc finger occupies 714-737 (FQCPFCVYRAKQKMHIGRHMERMH).

In terms of assembly, isoform D interacts with JIL-1. As to expression, by stage 11, isoform B is expressed throughout the mesoderm, whereas isoform A, isoform D and isoform L are expressed throughout the ectoderm. Expression becomes restricted during later stages; starting from stage 14 to 16, isoform B is expressed in muscle. Isoform A, isoform D, and at low levels isoform B, are expressed in the CNS. Expression is also seen in specific types of cells in the embryo; isoform A and isoform L are expressed in a dynamic pattern in the ventral neurogenic region starting at stage 7. Isoform L is expressed around the tracheal pits at stage 11.

It is found in the nucleus. Putative transcription factor required for axon growth and guidance in the central and peripheral nervous systems. Repels CNS axons away from the midline by promoting the expression of the midline repellent sli and its receptor robo. This chain is Longitudinals lacking protein, isoforms A/B/D/L, found in Drosophila melanogaster (Fruit fly).